Reading from the N-terminus, the 343-residue chain is Calcium/calmodulin-dependent protein kinase type 1B (343 aa).

Residues 15–270 enclose the Protein kinase domain; sequence YEIRERLGSG…CQQALRHLWI (256 aa). Residues 21-29 and Lys44 contribute to the ATP site; that span reads LGSGAFSEV. Asp136 serves as the catalytic Proton acceptor. The tract at residues 290–311 is calmodulin-binding; the sequence is KNFARTHWKRAFNATSFLRHIR. Positions 319–343 are disordered; it reads GEGASEQGMARHSHSGLRAGQPPKW.

The protein belongs to the protein kinase superfamily. CAMK Ser/Thr protein kinase family. CaMK subfamily. Phosphorylated by CAMKK1.

It is found in the cytoplasm. Its subcellular location is the nucleus. The catalysed reaction is L-seryl-[protein] + ATP = O-phospho-L-seryl-[protein] + ADP + H(+). The enzyme catalyses L-threonyl-[protein] + ATP = O-phospho-L-threonyl-[protein] + ADP + H(+). Its activity is regulated as follows. Activated by Ca(2+)/calmodulin. Its function is as follows. Calcium/calmodulin-dependent protein kinase belonging to a proposed calcium-triggered signaling cascade. In vitro phosphorylates CREB1 and SYN1/synapsin I. Phosphorylates and activates CAMK1. In Homo sapiens (Human), this protein is Calcium/calmodulin-dependent protein kinase type 1B (PNCK).